Consider the following 622-residue polypeptide: Signal recognition particle subunit SRP68 (622 aa).

Residues 576 to 622 (RDATPKKAAKGSSAAAASSKTSNQEEEEQQGLTGMLSGWKKSFWGNK) are disordered. A compositionally biased stretch (low complexity) spans 585–595 (KGSSAAAASSK).

Belongs to the SRP68 family. In terms of assembly, heterodimer with srpa-72. Srpa-68/srpa-72 heterodimer formation is stabilized by the presence of 7SL RNA. Component of a signal recognition particle (SRP) complex that consists of a 7SL RNA molecule of 300 nucleotides and six protein subunits: srpa-72, srpa-68, SRP54, F37F2.2/SRP19, F25G6.8/SRP14 and ZK512.4/SRP9. Within the SRP complex, interacts (via C-terminus) with srpa-72 (via N-terminus).

Its subcellular location is the cytoplasm. The protein localises to the nucleus. The protein resides in the nucleolus. It localises to the endoplasmic reticulum. In terms of biological role, component of the signal recognition particle (SRP) complex, a ribonucleoprotein complex that mediates the cotranslational targeting of secretory and membrane proteins to the endoplasmic reticulum (ER). The SRP complex interacts with the signal sequence in nascent secretory and membrane proteins and directs them to the membrane of the ER. The SRP complex targets the ribosome-nascent chain complex to the SRP receptor (SR), which is anchored in the ER, where SR compaction and GTPase rearrangement drive cotranslational protein translocation into the ER. Binds the signal recognition particle RNA (7SL RNA), srpa-72 binds to this complex subsequently. The SRP complex possibly participates in the elongation arrest function. This Caenorhabditis elegans protein is Signal recognition particle subunit SRP68.